Here is a 351-residue protein sequence, read N- to C-terminus: c-di-GMP synthase (351 aa).

It belongs to the CD-NTase family. E05 subfamily.

It catalyses the reaction 2 GTP = 3',3'-c-di-GMP + 2 diphosphate. Its function is as follows. Cyclic nucleotide synthase (second messenger synthase) of a CBASS antivirus system. CBASS (cyclic oligonucleotide-based antiphage signaling system) provides immunity against bacteriophage. The CD-NTase protein synthesizes cyclic nucleotides in response to infection; these serve as specific second messenger signals. The signals activate a diverse range of effectors, leading to bacterial cell death and thus abortive phage infection. A type I-D(GG) CBASS system. Cyclic dinucleotide synthase that catalyzes the synthesis of c-di-GMP, has no activity with other NTP substrates. In Capnocytophaga granulosa (strain ATCC 51502 / DSM 11449 / JCM 8566 / LMG 16022 / NCTC 12948 / B0611), this protein is c-di-GMP synthase (cdnE).